Consider the following 156-residue polypeptide: Small ribosomal subunit protein uS7 (156 aa).

This sequence belongs to the universal ribosomal protein uS7 family. As to quaternary structure, part of the 30S ribosomal subunit. Contacts proteins S9 and S11.

One of the primary rRNA binding proteins, it binds directly to 16S rRNA where it nucleates assembly of the head domain of the 30S subunit. Is located at the subunit interface close to the decoding center, probably blocks exit of the E-site tRNA. The polypeptide is Small ribosomal subunit protein uS7 (Geobacter sulfurreducens (strain ATCC 51573 / DSM 12127 / PCA)).